Consider the following 131-residue polypeptide: Aspartate 1-decarboxylase (131 aa).

Residue S25 is the Schiff-base intermediate with substrate; via pyruvic acid of the active site. A Pyruvic acid (Ser) modification is found at S25. T57 contributes to the substrate binding site. Y58 serves as the catalytic Proton donor. A substrate-binding site is contributed by 73-75 (GAA).

Belongs to the PanD family. As to quaternary structure, heterooctamer of four alpha and four beta subunits. Pyruvate serves as cofactor. In terms of processing, is synthesized initially as an inactive proenzyme, which is activated by self-cleavage at a specific serine bond to produce a beta-subunit with a hydroxyl group at its C-terminus and an alpha-subunit with a pyruvoyl group at its N-terminus.

It is found in the cytoplasm. The enzyme catalyses L-aspartate + H(+) = beta-alanine + CO2. The protein operates within cofactor biosynthesis; (R)-pantothenate biosynthesis; beta-alanine from L-aspartate: step 1/1. In terms of biological role, catalyzes the pyruvoyl-dependent decarboxylation of aspartate to produce beta-alanine. In Acaryochloris marina (strain MBIC 11017), this protein is Aspartate 1-decarboxylase.